We begin with the raw amino-acid sequence, 179 residues long: Putative DUP240 protein DFP1 (179 aa).

The next 2 helical transmembrane spans lie at 4-24 and 26-46; these read FLLFVLTILATLTNIWFSGVL and PAMVIRICLGGSMVVLQIWSF.

It belongs to the DUP/COS family.

Its subcellular location is the membrane. The polypeptide is Putative DUP240 protein DFP1 (Saccharomyces cerevisiae (strain ATCC 204508 / S288c) (Baker's yeast)).